Reading from the N-terminus, the 354-residue chain is UDP-N-acetylglucosamine--N-acetylmuramyl-(pentapeptide) pyrophosphoryl-undecaprenol N-acetylglucosamine transferase (354 aa).

Residues 11-13 (TGG), Asn117, Arg160, Ser186, and Gln288 contribute to the UDP-N-acetyl-alpha-D-glucosamine site.

It belongs to the glycosyltransferase 28 family. MurG subfamily.

The protein resides in the cell inner membrane. The catalysed reaction is di-trans,octa-cis-undecaprenyl diphospho-N-acetyl-alpha-D-muramoyl-L-alanyl-D-glutamyl-meso-2,6-diaminopimeloyl-D-alanyl-D-alanine + UDP-N-acetyl-alpha-D-glucosamine = di-trans,octa-cis-undecaprenyl diphospho-[N-acetyl-alpha-D-glucosaminyl-(1-&gt;4)]-N-acetyl-alpha-D-muramoyl-L-alanyl-D-glutamyl-meso-2,6-diaminopimeloyl-D-alanyl-D-alanine + UDP + H(+). The protein operates within cell wall biogenesis; peptidoglycan biosynthesis. Cell wall formation. Catalyzes the transfer of a GlcNAc subunit on undecaprenyl-pyrophosphoryl-MurNAc-pentapeptide (lipid intermediate I) to form undecaprenyl-pyrophosphoryl-MurNAc-(pentapeptide)GlcNAc (lipid intermediate II). This Rickettsia canadensis (strain McKiel) protein is UDP-N-acetylglucosamine--N-acetylmuramyl-(pentapeptide) pyrophosphoryl-undecaprenol N-acetylglucosamine transferase.